A 498-amino-acid chain; its full sequence is WD repeat-containing protein 55 homolog (498 aa).

Positions 1 to 131 (MHTHNNFKTP…ATFDLDEDDE (131 aa)) are disordered. Composition is skewed to acidic residues over residues 12–23 (DEDELDDLDEDM) and 31–48 (IEQE…EYDL). 6 WD repeats span residues 154 to 193 (KLED…NKLL), 198 to 237 (VHSK…LKKL), 241 to 279 (AHDD…AIFE), 282 to 321 (ELED…MYVQ), 324 to 363 (PYEE…YHCD), and 408 to 447 (QHNM…DFGE).

It belongs to the WD repeat WDR55 family.

This Drosophila simulans (Fruit fly) protein is WD repeat-containing protein 55 homolog.